Consider the following 394-residue polypeptide: 1-deoxy-D-xylulose 5-phosphate reductoisomerase (394 aa).

NADPH contacts are provided by Thr10, Gly11, Ser12, Ile13, Gly38, Arg39, Asn40, and Asn123. Lys124 serves as a coordination point for 1-deoxy-D-xylulose 5-phosphate. Glu125 contributes to the NADPH binding site. Asp149 contacts Mn(2+). 4 residues coordinate 1-deoxy-D-xylulose 5-phosphate: Ser150, Glu151, Ser175, and His198. Glu151 contacts Mn(2+). Gly204 is an NADPH binding site. Positions 211, 216, 217, and 220 each coordinate 1-deoxy-D-xylulose 5-phosphate. A Mn(2+)-binding site is contributed by Glu220.

It belongs to the DXR family. Mg(2+) serves as cofactor. The cofactor is Mn(2+).

The catalysed reaction is 2-C-methyl-D-erythritol 4-phosphate + NADP(+) = 1-deoxy-D-xylulose 5-phosphate + NADPH + H(+). The protein operates within isoprenoid biosynthesis; isopentenyl diphosphate biosynthesis via DXP pathway; isopentenyl diphosphate from 1-deoxy-D-xylulose 5-phosphate: step 1/6. Functionally, catalyzes the NADPH-dependent rearrangement and reduction of 1-deoxy-D-xylulose-5-phosphate (DXP) to 2-C-methyl-D-erythritol 4-phosphate (MEP). This is 1-deoxy-D-xylulose 5-phosphate reductoisomerase from Cereibacter sphaeroides (strain KD131 / KCTC 12085) (Rhodobacter sphaeroides).